We begin with the raw amino-acid sequence, 204 residues long: Holliday junction branch migration complex subunit RuvA (204 aa).

The segment at 1-64 (MIAQIRGKLI…QDSILLVGFC (64 aa)) is domain I. Residues 65–143 (TENEKQLFKL…GWTSKEQITF (79 aa)) form a domain II region. Positions 144–154 (INNKKDAIDQS) are flexible linker. Residues 154 to 204 (SVMEEDAISALINLGYKSQAAKDAIDRVISEGGENKSLDVILKKALKVLAM) form a domain III region.

It belongs to the RuvA family. Homotetramer. Forms an RuvA(8)-RuvB(12)-Holliday junction (HJ) complex. HJ DNA is sandwiched between 2 RuvA tetramers; dsDNA enters through RuvA and exits via RuvB. An RuvB hexamer assembles on each DNA strand where it exits the tetramer. Each RuvB hexamer is contacted by two RuvA subunits (via domain III) on 2 adjacent RuvB subunits; this complex drives branch migration. In the full resolvosome a probable DNA-RuvA(4)-RuvB(12)-RuvC(2) complex forms which resolves the HJ.

It is found in the cytoplasm. In terms of biological role, the RuvA-RuvB-RuvC complex processes Holliday junction (HJ) DNA during genetic recombination and DNA repair, while the RuvA-RuvB complex plays an important role in the rescue of blocked DNA replication forks via replication fork reversal (RFR). RuvA specifically binds to HJ cruciform DNA, conferring on it an open structure. The RuvB hexamer acts as an ATP-dependent pump, pulling dsDNA into and through the RuvAB complex. HJ branch migration allows RuvC to scan DNA until it finds its consensus sequence, where it cleaves and resolves the cruciform DNA. This chain is Holliday junction branch migration complex subunit RuvA, found in Syntrophus aciditrophicus (strain SB).